The chain runs to 412 residues: 4-hydroxyphenylpyruvate dioxygenase (412 aa).

VOC domains are found at residues 31-179 (GYDH…LISR) and 209-369 (RIDH…LFTK). 3 residues coordinate Fe cation: H212, H295, and E380.

Belongs to the 4HPPD family. Fe cation serves as cofactor.

It catalyses the reaction 3-(4-hydroxyphenyl)pyruvate + O2 = homogentisate + CO2. It participates in amino-acid degradation; L-phenylalanine degradation; acetoacetate and fumarate from L-phenylalanine: step 3/6. This chain is 4-hydroxyphenylpyruvate dioxygenase, found in Neurospora crassa (strain ATCC 24698 / 74-OR23-1A / CBS 708.71 / DSM 1257 / FGSC 987).